The primary structure comprises 335 residues: Adenosine deaminase (335 aa).

Positions 12 and 14 each coordinate Zn(2+). Substrate is bound by residues His-14 and Asp-16. A Zn(2+)-binding site is contributed by His-197. The Proton donor role is filled by Glu-200. Zn(2+) is bound at residue Asp-278.

The protein belongs to the metallo-dependent hydrolases superfamily. Adenosine and AMP deaminases family. Adenosine deaminase subfamily. The cofactor is Zn(2+).

The catalysed reaction is adenosine + H2O + H(+) = inosine + NH4(+). It carries out the reaction 2'-deoxyadenosine + H2O + H(+) = 2'-deoxyinosine + NH4(+). Catalyzes the hydrolytic deamination of adenosine and 2-deoxyadenosine. This chain is Adenosine deaminase, found in Clostridium botulinum (strain ATCC 19397 / Type A).